A 98-amino-acid chain; its full sequence is NADH-ubiquinone oxidoreductase chain 4L (98 aa).

The next 3 membrane-spanning stretches (helical) occupy residues 1–21 (MSITTLNIMVAFMMALLGMFV), 29–49 (SLLCLEGMMLSLFMLATIVSL), and 61–81 (VILLVFAACEAAVGLALLIMV).

This sequence belongs to the complex I subunit 4L family. In terms of assembly, core subunit of respiratory chain NADH dehydrogenase (Complex I) which is composed of 45 different subunits.

Its subcellular location is the mitochondrion inner membrane. It carries out the reaction a ubiquinone + NADH + 5 H(+)(in) = a ubiquinol + NAD(+) + 4 H(+)(out). Functionally, core subunit of the mitochondrial membrane respiratory chain NADH dehydrogenase (Complex I) which catalyzes electron transfer from NADH through the respiratory chain, using ubiquinone as an electron acceptor. Part of the enzyme membrane arm which is embedded in the lipid bilayer and involved in proton translocation. The protein is NADH-ubiquinone oxidoreductase chain 4L (MT-ND4L) of Ochotona princeps (Southern American pika).